Consider the following 802-residue polypeptide: Exocyst complex component 6 (802 aa).

The protein belongs to the SEC15 family. The exocyst complex is composed of EXOC1, EXOC2, EXOC3, EXOC4, EXOC5, EXOC6, EXOC7 and EXOC8. Interacts with CNTRL. Interacts with RAB11A in a GTP-dependent manner.

It is found in the cytoplasm. It localises to the perinuclear region. The protein resides in the cell projection. The protein localises to the growth cone. Its subcellular location is the midbody. It is found in the midbody ring. Its function is as follows. Component of the exocyst complex involved in the docking of exocytic vesicles with fusion sites on the plasma membrane. Together with RAB11A, RAB3IP, RAB8A, PARD3, PRKCI, ANXA2, CDC42 and DNMBP promotes transcytosis of PODXL to the apical membrane initiation sites (AMIS), apical surface formation and lumenogenesis. The sequence is that of Exocyst complex component 6 (Exoc6) from Mus musculus (Mouse).